A 397-amino-acid chain; its full sequence is Enoyl-[acyl-carrier-protein] reductase [NADH] (397 aa).

Residues 48 to 53, 74 to 75, 111 to 112, and 139 to 140 contribute to the NAD(+) site; these read GASTGY, FE, DA, and AA. Tyr-225 serves as a coordination point for substrate. Residue Tyr-235 is the Proton donor of the active site. NAD(+)-binding positions include Lys-244 and 273-275; that span reads VVT.

Belongs to the TER reductase family. Monomer.

It carries out the reaction a 2,3-saturated acyl-[ACP] + NAD(+) = a (2E)-enoyl-[ACP] + NADH + H(+). Its pathway is lipid metabolism; fatty acid biosynthesis. Its function is as follows. Involved in the final reduction of the elongation cycle of fatty acid synthesis (FAS II). Catalyzes the reduction of a carbon-carbon double bond in an enoyl moiety that is covalently linked to an acyl carrier protein (ACP). The sequence is that of Enoyl-[acyl-carrier-protein] reductase [NADH] from Burkholderia pseudomallei (strain 1710b).